We begin with the raw amino-acid sequence, 802 residues long: DSC E3 ubiquitin ligase complex subunit A (802 aa).

A signal peptide spans methionine 1 to serine 22. Residues arginine 23–lysine 381 lie on the Lumenal side of the membrane. N-linked (GlcNAc...) asparagine glycosylation is found at asparagine 48, asparagine 71, asparagine 115, asparagine 126, asparagine 148, and asparagine 166. A helical membrane pass occupies residues tyrosine 382–leucine 402. Topologically, residues arginine 403 to aspartate 429 are cytoplasmic. The helical transmembrane segment at alanine 430 to alanine 450 threads the bilayer. Over threonine 451 to alanine 453 the chain is Lumenal. The chain crosses the membrane as a helical span at residues phenylalanine 454–valine 474. Residues glutamine 475–methionine 550 lie on the Cytoplasmic side of the membrane. The tract at residues glutamate 478–glutamine 541 is disordered. The span at threonine 532 to glutamine 541 shows a compositional bias: polar residues. Residues tyrosine 551–tryptophan 571 traverse the membrane as a helical segment. Residues proline 572–arginine 574 lie on the Lumenal side of the membrane. The chain crosses the membrane as a helical span at residues leucine 575 to isoleucine 595. The Cytoplasmic portion of the chain corresponds to glycine 596 to arginine 608. The helical transmembrane segment at tryptophan 609–valine 629 threads the bilayer. Residues arginine 630–threonine 642 are Lumenal-facing. Residues alanine 643–leucine 663 traverse the membrane as a helical segment. At glycine 664 to valine 802 the chain is on the cytoplasmic side. An RING-type; atypical zinc finger spans residues cysteine 732–arginine 796.

As to quaternary structure, component of the DSC E3 ubiquitin ligase complex composed of dscA, dscB, dscC and dscD.

It is found in the endoplasmic reticulum membrane. The catalysed reaction is S-ubiquitinyl-[E2 ubiquitin-conjugating enzyme]-L-cysteine + [acceptor protein]-L-lysine = [E2 ubiquitin-conjugating enzyme]-L-cysteine + N(6)-ubiquitinyl-[acceptor protein]-L-lysine.. The protein operates within protein modification; protein ubiquitination. Its function is as follows. Catalytic component of the DSC E3 ubiquitin ligase complex which is required for the srbA transcriptional activator proteolytic cleavage to release the soluble transcription factor from the membrane in low oxygen or sterol conditions. Required for growth during hypoxia and triazole drug susceptibility, as well as for virulence in a murine model of invasive pulmonary aspergillosis (IPA). The protein is DSC E3 ubiquitin ligase complex subunit A of Aspergillus fumigatus (strain CBS 144.89 / FGSC A1163 / CEA10) (Neosartorya fumigata).